Here is a 178-residue protein sequence, read N- to C-terminus: Large ribosomal subunit protein uL6 (178 aa).

This sequence belongs to the universal ribosomal protein uL6 family. In terms of assembly, part of the 50S ribosomal subunit.

Functionally, this protein binds to the 23S rRNA, and is important in its secondary structure. It is located near the subunit interface in the base of the L7/L12 stalk, and near the tRNA binding site of the peptidyltransferase center. This Bacillus licheniformis (strain ATCC 14580 / DSM 13 / JCM 2505 / CCUG 7422 / NBRC 12200 / NCIMB 9375 / NCTC 10341 / NRRL NRS-1264 / Gibson 46) protein is Large ribosomal subunit protein uL6.